A 479-amino-acid chain; its full sequence is Aspartyl/glutamyl-tRNA(Asn/Gln) amidotransferase subunit B (479 aa).

This sequence belongs to the GatB/GatE family. GatB subfamily. As to quaternary structure, heterotrimer of A, B and C subunits.

The enzyme catalyses L-glutamyl-tRNA(Gln) + L-glutamine + ATP + H2O = L-glutaminyl-tRNA(Gln) + L-glutamate + ADP + phosphate + H(+). The catalysed reaction is L-aspartyl-tRNA(Asn) + L-glutamine + ATP + H2O = L-asparaginyl-tRNA(Asn) + L-glutamate + ADP + phosphate + 2 H(+). Its function is as follows. Allows the formation of correctly charged Asn-tRNA(Asn) or Gln-tRNA(Gln) through the transamidation of misacylated Asp-tRNA(Asn) or Glu-tRNA(Gln) in organisms which lack either or both of asparaginyl-tRNA or glutaminyl-tRNA synthetases. The reaction takes place in the presence of glutamine and ATP through an activated phospho-Asp-tRNA(Asn) or phospho-Glu-tRNA(Gln). The sequence is that of Aspartyl/glutamyl-tRNA(Asn/Gln) amidotransferase subunit B from Streptococcus equi subsp. zooepidemicus (strain MGCS10565).